A 255-amino-acid chain; its full sequence is Ditrans,polycis-undecaprenyl-diphosphate synthase ((2E,6E)-farnesyl-diphosphate specific) (255 aa).

D21 is an active-site residue. D21 serves as a coordination point for Mg(2+). Residues 22 to 25, W26, R34, H38, and 66 to 68 contribute to the substrate site; these read GNGR and SSE. Residue N69 is the Proton acceptor of the active site. Substrate-binding positions include W70, R72, R189, and 195–197; that span reads RIS. E208 lines the Mg(2+) pocket.

This sequence belongs to the UPP synthase family. In terms of assembly, homodimer. Requires Mg(2+) as cofactor.

The enzyme catalyses 8 isopentenyl diphosphate + (2E,6E)-farnesyl diphosphate = di-trans,octa-cis-undecaprenyl diphosphate + 8 diphosphate. Catalyzes the sequential condensation of isopentenyl diphosphate (IPP) with (2E,6E)-farnesyl diphosphate (E,E-FPP) to yield (2Z,6Z,10Z,14Z,18Z,22Z,26Z,30Z,34E,38E)-undecaprenyl diphosphate (di-trans,octa-cis-UPP). UPP is the precursor of glycosyl carrier lipid in the biosynthesis of bacterial cell wall polysaccharide components such as peptidoglycan and lipopolysaccharide. The chain is Ditrans,polycis-undecaprenyl-diphosphate synthase ((2E,6E)-farnesyl-diphosphate specific) from Xylella fastidiosa (strain Temecula1 / ATCC 700964).